We begin with the raw amino-acid sequence, 372 residues long: Proton-coupled zinc antiporter SLC30A2 (372 aa).

The Cytoplasmic segment spans residues 1 to 140 (MEAKEKQHLL…TMNFGWQRAE (140 aa)). A Mitochondrial localization signal motif is present at residues 51–54 (HHCH). The Zn(2+) site is built by Cys-53, His-106, and Asp-110. Residues 141-161 (ILGALVSVLSIWVVTGVLVYL) traverse the membrane as a helical segment. Residues 162–175 (AVERLISGDYEIDG) lie on the Lumenal side of the membrane. The chain crosses the membrane as a helical span at residues 176 to 196 (GTMLITSGCAVAVNIIMGLTL). The Cytoplasmic segment spans residues 197–220 (HQSGHGHSHGTTNQQEENPSVRAA). The helical transmembrane segment at 221-241 (FIHVIGDFMQSMGVLVAAYIL) threads the bilayer. Zn(2+) contacts are provided by His-223 and Asp-227. The Lumenal portion of the chain corresponds to 242 to 249 (YFKPEYKY). Residues 250–270 (VDPICTFVFSILVLGTTLTIL) form a helical membrane-spanning segment. The Cytoplasmic portion of the chain corresponds to 271-304 (RDVILVLMEGTPKGVDFTAVRDLLLSVEGVEALH). A Lysosomal targeting motif motif is present at residues 294 to 295 (LL). Residue Ser-296 is modified to Phosphoserine. Zn(2+)-binding residues include His-304, His-321, and Glu-355. The helical transmembrane segment at 305–325 (SLHIWALTVAQPVLSVHIAIA) threads the bilayer. Residues 326–372 (QNTDAQAVLKTASSRLQGKFHFHTVTIQIEDYSEDMKDCQACQGPSD) lie on the Lumenal side of the membrane.

The protein belongs to the cation diffusion facilitator (CDF) transporter (TC 2.A.4) family. SLC30A subfamily. In terms of assembly, homodimer. Interacts (via lysosomal targeting motif) with AP3D1; in AP-3-mediated transport to lysosomes. Interacts with TMEM163. Phosphorylated at Ser-296. Phosphorylation at Ser-296 prevents localization to lysosomes. Dephosphorylation of Ser-296 which triggers localization to lysosomes, accumulation of zinc into lysosomes and lysosomal-mediated cell death is induced by TNF-alpha.

It is found in the cytoplasmic vesicle. Its subcellular location is the secretory vesicle membrane. It localises to the zymogen granule membrane. The protein resides in the endosome membrane. The protein localises to the lysosome membrane. It is found in the mitochondrion inner membrane. Its subcellular location is the cell membrane. It carries out the reaction Zn(2+)(in) + 2 H(+)(out) = Zn(2+)(out) + 2 H(+)(in). Functionally, electroneutral proton-coupled antiporter concentrating zinc ions into a variety of intracellular organelles including endosomes, zymogen granules and mitochondria. Thereby, plays a crucial role in cellular zinc homeostasis to confer upon cells protection against its potential cytotoxicity. Regulates the zinc concentration of milk, through the transport of zinc ions into secretory vesicles of mammary cells. By concentrating zinc ions into lysosomes participates to lysosomal-mediated cell death during early mammary gland involution. Its function is as follows. Electroneutral proton-coupled antiporter mediating the efflux of zinc ions through the plasma membrane. The chain is Proton-coupled zinc antiporter SLC30A2 from Homo sapiens (Human).